The following is a 329-amino-acid chain: MGKLIDIPIVVESGQKYKTSQGVTAIKDGIKSSGQDHERLPKPKWLRIVNHTTPAYSQVKEQVQKHRLATVCEEAKCPNISECWSHGTATIMLMGAVCTRACRFCSVDTGNPHGWLDAEEPENTAETVALMNLDYVVLTSVNRDDLPDGGANHYAKTIRAIKKRSPRTKVEALTPDFQGSERDVAVLLDSGVDVFAQNVETVERLTHPVRDNRAGYQQTLNVLAFAKKYRPDVLTKTSLMLGLGETDEEIIRTMDDLRTHHVDILTLGQYLQPTKNHLPIARYVTPETFSELRQIGLKKGFFEVASGPLVRSSYRADRVFKRDNLGLDV.

Residues Cys72, Cys77, Cys83, Cys98, Cys102, Cys105, and Ser313 each coordinate [4Fe-4S] cluster. Residues 83–303 (CWSHGTATIM…QIGLKKGFFE (221 aa)) form the Radical SAM core domain.

This sequence belongs to the radical SAM superfamily. Lipoyl synthase family. The cofactor is [4Fe-4S] cluster.

It localises to the cytoplasm. It carries out the reaction [[Fe-S] cluster scaffold protein carrying a second [4Fe-4S](2+) cluster] + N(6)-octanoyl-L-lysyl-[protein] + 2 oxidized [2Fe-2S]-[ferredoxin] + 2 S-adenosyl-L-methionine + 4 H(+) = [[Fe-S] cluster scaffold protein] + N(6)-[(R)-dihydrolipoyl]-L-lysyl-[protein] + 4 Fe(3+) + 2 hydrogen sulfide + 2 5'-deoxyadenosine + 2 L-methionine + 2 reduced [2Fe-2S]-[ferredoxin]. Its pathway is protein modification; protein lipoylation via endogenous pathway; protein N(6)-(lipoyl)lysine from octanoyl-[acyl-carrier-protein]: step 2/2. Its function is as follows. Catalyzes the radical-mediated insertion of two sulfur atoms into the C-6 and C-8 positions of the octanoyl moiety bound to the lipoyl domains of lipoate-dependent enzymes, thereby converting the octanoylated domains into lipoylated derivatives. The protein is Lipoyl synthase of Legionella pneumophila (strain Corby).